The chain runs to 117 residues: Large ribosomal subunit protein uL18 (117 aa).

This sequence belongs to the universal ribosomal protein uL18 family. In terms of assembly, part of the 50S ribosomal subunit; part of the 5S rRNA/L5/L18/L25 subcomplex. Contacts the 5S and 23S rRNAs.

Its function is as follows. This is one of the proteins that bind and probably mediate the attachment of the 5S RNA into the large ribosomal subunit, where it forms part of the central protuberance. This chain is Large ribosomal subunit protein uL18, found in Vibrio proteolyticus (Aeromonas proteolytica).